The primary structure comprises 223 residues: MDTAVVYADLHLARTGEPKRESPPSLSPDTCQCPRWHRLALKLGCACFILLVLSVIGLGVLVLTLLQKPLLQNSPADVQENRTKSTDSPAKLKCPKDWLSHRDKCFHVSQTSNSWKESLADCDGKGATLLLIQDQEELRFVRNLTKGKDRSFWIGLSYTLPDRNWKWINGSTLNSDVLSITGDTEKGSCASVSQDKVLSESCDSDNIWICQKELKRESTCNDS.

Over 1-45 the chain is Cytoplasmic; that stretch reads MDTAVVYADLHLARTGEPKRESPPSLSPDTCQCPRWHRLALKLGC. Positions 5-10 match the ITIM motif motif; sequence VVYADL. An LCK-binding motif motif is present at residues 31–34; the sequence is CQCP. The chain crosses the membrane as a helical; Signal-anchor for type II membrane protein span at residues 46-66; that stretch reads ACFILLVLSVIGLGVLVLTLL. Topologically, residues 67 to 223 are extracellular; that stretch reads QKPLLQNSPA…LKRESTCNDS (157 aa). Positions 101 to 211 constitute a C-type lectin domain; that stretch reads HRDKCFHVSQ…CDSDNIWICQ (111 aa). Intrachain disulfides connect C122–C210 and C189–C202.

Homodimer; disulfide-linked. Interacts with tyrosine kinase LCK. Binds PTPN6/SHP-1 in a phosphorylation-dependent manner. Expressed in a subset of natural killer cells.

The protein resides in the membrane. Receptor for CLEC2D/OCIL. Ligand-binding contributes to inhibition of cytotoxic natural killer (NK) cells. May mediate MHC class I-independent 'missing-self' recognition of allografts, tumor cells and virus-infected cells. This Rattus norvegicus (Rat) protein is Killer cell lectin-like receptor subfamily B member 1B allele C.